The primary structure comprises 229 residues: Interleukin-27 subunit beta (229 aa).

The N-terminal stretch at 1 to 20 (MTPQLLLALVLWASCPPCSG) is a signal peptide. Fibronectin type-III domains follow at residues 24-130 (PPAA…IKPD) and 131-227 (PPEG…TMSL). Residues Asn55 and Asn105 are each glycosylated (N-linked (GlcNAc...) asparagine).

Belongs to the type I cytokine receptor family. Type 3 subfamily. Heterodimer with IL27/IL27A; not disulfide-linked. This heterodimer is known as interleukin IL-27. Heterodimer with IL12A; not disulfide-linked. This heterodimer is known as interleukin IL-35. Interacts with SQSTM1.

The protein resides in the secreted. In terms of biological role, associates with IL27 to form the IL-27 interleukin, a heterodimeric cytokine which functions in innate immunity. IL-27 has pro- and anti-inflammatory properties, that can regulate T-helper cell development, suppress T-cell proliferation, stimulate cytotoxic T-cell activity, induce isotype switching in B-cells, and that has diverse effects on innate immune cells. Among its target cells are CD4 T-helper cells which can differentiate in type 1 effector cells (TH1), type 2 effector cells (TH2) and IL17 producing helper T-cells (TH17). It drives rapid clonal expansion of naive but not memory CD4 T-cells. It also strongly synergizes with IL-12 to trigger interferon-gamma/IFN-gamma production of naive CD4 T-cells, binds to the cytokine receptor WSX-1/TCCR. Another important role of IL-27 is its antitumor activity as well as its antiangiogenic activity with activation of production of antiangiogenic chemokines. The chain is Interleukin-27 subunit beta (EBI3) from Homo sapiens (Human).